The primary structure comprises 188 residues: Transcription antitermination protein NusB (188 aa).

The disordered stretch occupies residues 154–188 (RAANPGAVSGSDAPVAPWDDSEELPAEDEAEDSRP). Residues 172–188 (DDSEELPAEDEAEDSRP) show a composition bias toward acidic residues.

It belongs to the NusB family.

In terms of biological role, involved in transcription antitermination. Required for transcription of ribosomal RNA (rRNA) genes. Binds specifically to the boxA antiterminator sequence of the ribosomal RNA (rrn) operons. The polypeptide is Transcription antitermination protein NusB (Corynebacterium efficiens (strain DSM 44549 / YS-314 / AJ 12310 / JCM 11189 / NBRC 100395)).